A 1600-amino-acid chain; its full sequence is A disintegrin and metalloproteinase with thrombospondin motifs 12 (1600 aa).

A signal peptide spans 1 to 25; that stretch reads MPCARGSWLAKLSIVAQLINFGAFC. Positions 26-244 are excised as a propeptide; sequence HGRQTQPWPV…TLRSRSLSRR (219 aa). A glycan (N-linked (GlcNAc...) asparagine) is linked at asparagine 105. A Cysteine switch motif is present at residues 210–217; sequence PICGLKDS. Residue cysteine 212 participates in Zn(2+) binding. One can recognise a Peptidase M12B domain in the interval 250–460; that stretch reads RWVETLVVAD…GRGFCLDDIP (211 aa). 11 disulfides stabilise this stretch: cysteine 326/cysteine 380, cysteine 355/cysteine 362, cysteine 374/cysteine 455, cysteine 413/cysteine 439, cysteine 482/cysteine 505, cysteine 493/cysteine 511, cysteine 500/cysteine 530, cysteine 524/cysteine 535, cysteine 558/cysteine 595, cysteine 562/cysteine 600, and cysteine 573/cysteine 585. Histidine 396 contributes to the Zn(2+) binding site. Glutamate 397 is an active-site residue. Residues histidine 400 and histidine 406 each contribute to the Zn(2+) site. The Disintegrin domain maps to 469 to 548; that stretch reads VIAPGVIYDV…GKKPESIPGG (80 aa). 4 consecutive TSP type-1 domains span residues 546 to 601, 827 to 887, 891 to 947, and 948 to 1001; these read PGGW…HPCR, KLLY…KDCP, WAGE…RDIL, and CPSD…QQCP. The segment at 705–831 is spacer 1; sequence CQTVKKLFRQ…DNDVEKLLYF (127 aa). The spacer 2 stretch occupies residues 1001-1321; that stretch reads PFSRRVLKPN…HLMKDHSPAY (321 aa). Disordered stretches follow at residues 1006–1140 and 1158–1179; these read VLKP…LSSS and PEVE…KDKS. The segment covering 1038–1047 has biased composition (low complexity); it reads PTPLSTPTVP. Polar residues predominate over residues 1048–1107; the sequence is ESMSTSTPTINSLGSTIASQEDANGMGWQNNSTQAEEGSHFPTSSGSTSQVPVTSWSLSI. Residues 1130–1140 show a composition bias toward low complexity; it reads TTTSDSGLSSS. TSP type-1 domains lie at 1318–1371, 1373–1428, 1429–1477, and 1478–1538; these read SPAY…RPCA, WRVG…CNLE, PCGE…NRHL, and CCHW…QACR. The PLAC domain maps to 1541-1581; it reads ADLTCLKDRLSISFCQTLKSMRKCSVPSVRAQCCLSCPQAP.

Interacts with COMP. Requires Zn(2+) as cofactor. Post-translationally, the precursor is cleaved by a furin endopeptidase. In terms of processing, subjected to an intracellular maturation process yielding a 120 kDa N-terminal fragment containing the metalloproteinase, disintegrin, one TSP type-1 and the Cys-rich domains and a 83 kDa C-terminal fragment containing the spacer 2 and four TSP type-1 domains. Glycosylated. Can be O-fucosylated by POFUT2 on a serine or a threonine residue found within the consensus sequence C1-X(2)-(S/T)-C2-G of the TSP type-1 repeat domains where C1 and C2 are the first and second cysteine residue of the repeat, respectively. Fucosylated repeats can then be further glycosylated by the addition of a beta-1,3-glucose residue by the glucosyltransferase, B3GALTL. Fucosylation mediates the efficient secretion of ADAMTS family members. Can also be C-glycosylated with one or two mannose molecules on tryptophan residues within the consensus sequence W-X-X-W of the TPRs, and N-glycosylated. These other glycosylations can also facilitate secretion.

Its subcellular location is the secreted. It is found in the extracellular space. It localises to the extracellular matrix. Inhibited by alpha-2 macroglobulin. In terms of biological role, metalloprotease that plays a role in the degradation of COMP. Also cleaves alpha-2 macroglobulin and aggregan. Has anti-tumorigenic properties. The sequence is that of A disintegrin and metalloproteinase with thrombospondin motifs 12 (Adamts12) from Mus musculus (Mouse).